The chain runs to 1007 residues: Serine/threonine-protein kinase PRP4 homolog (1007 aa).

The segment covering 1 to 10 (MAAAETQSLR) has biased composition (polar residues). The disordered stretch occupies residues 1–99 (MAAAETQSLR…EGMSPAKRTK (99 aa)). N-acetylalanine is present on Ala-2. Phosphoserine is present on residues Ser-8, Ser-20, Ser-23, and Ser-32. Composition is skewed to basic residues over residues 39–59 (KHSR…KHKH) and 67–81 (KKHK…HKRK). Residues 82-91 (EVIDASDKEG) show a composition bias toward basic and acidic residues. A phosphoserine mark is found at Ser-87 and Ser-93. Lys-99 carries the N6-acetyllysine; alternate modification. Lys-99 participates in a covalent cross-link: Glycyl lysine isopeptide (Lys-Gly) (interchain with G-Cter in SUMO2); alternate. Lys-111 participates in a covalent cross-link: Glycyl lysine isopeptide (Lys-Gly) (interchain with G-Cter in SUMO2). Lys-117 participates in a covalent cross-link: Glycyl lysine isopeptide (Lys-Gly) (interchain with G-Cter in SUMO2); alternate. Lys-117 is covalently cross-linked (Glycyl lysine isopeptide (Lys-Gly) (interchain with G-Cter in SUMO1); alternate). Ser-131 bears the Phosphoserine mark. The residue at position 140 (Tyr-140) is a Phosphotyrosine. Disordered stretches follow at residues 140-533 (YESG…EEED) and 559-583 (SNMS…SPDD). 3 positions are modified to phosphoserine: Ser-142, Ser-144, and Ser-166. The segment covering 157 to 168 (GNRSSTRSSSTK) has biased composition (low complexity). Glycyl lysine isopeptide (Lys-Gly) (interchain with G-Cter in SUMO2) cross-links involve residues Lys-170 and Lys-177. 2 stretches are compositionally biased toward basic residues: residues 179-202 (TTKK…KKSK) and 214-230 (RSKS…SKRS). Phosphoserine is present on residues Ser-239, Ser-241, Ser-257, Ser-277, Ser-283, Ser-292, and Ser-294. Basic and acidic residues predominate over residues 247-270 (RSQEKIGKARSPTDDKVKIEDKSK). The segment covering 302–315 (SKDRRSRSKERKSK) has biased composition (basic residues). Over residues 316-325 (RSETDKEKKP) the composition is skewed to basic and acidic residues. 5 positions are modified to phosphoserine: Ser-328, Ser-354, Ser-356, Ser-366, and Ser-368. The span at 342 to 367 (PSRRPGRSPKRRSLSPKPRDKSRRSR) shows a compositional bias: basic residues. Thr-385 is modified (phosphothreonine). Phosphoserine is present on Ser-387. Composition is skewed to basic and acidic residues over residues 395–408 (RSLE…ERRR) and 415–429 (RPRD…RSKD). 3 positions are modified to phosphoserine: Ser-427, Ser-431, and Ser-437. Over residues 438 to 497 (PTRRRSRSPIRRRSRSPLRRSRSPRRRSRSPRRRDRGRRSRSRLRRRSRSRGGRRRRSRS) the composition is skewed to basic residues. A phosphoserine mark is found at Ser-518, Ser-519, Ser-520, Ser-565, Ser-569, Ser-578, and Ser-580. The span at 518-533 (SSSDDNLEDFDVEEED) shows a compositional bias: acidic residues. Residues 562-581 (SVPSEPSSPQSSTRTRSPSP) are compositionally biased toward low complexity. Glycyl lysine isopeptide (Lys-Gly) (interchain with G-Cter in SUMO2) cross-links involve residues Lys-593 and Lys-659. Residues 687-1003 (YNVYGYTGQG…INQALQHAFI (317 aa)) form the Protein kinase domain. ATP contacts are provided by residues 693–701 (TGQGVFSNV) and Lys-717. At Lys-717 the chain carries N6-acetyllysine. The active-site Proton acceptor is the Asp-815. Position 849 is a phosphotyrosine (Tyr-849). Residue Ser-852 is modified to Phosphoserine.

The protein belongs to the protein kinase superfamily. CMGC Ser/Thr protein kinase family. As to quaternary structure, interacts with CLK1 C-terminus. Associates with the U5 snRNP and NCOR1 deacetylase complexes. Identified in the spliceosome C complex. Phosphorylated by CLK1. Autophosphorylated; phosphorylation inhibits interaction with its targets, such as PRPF6 or SMARCA4.

Its subcellular location is the nucleus. The protein resides in the chromosome. The protein localises to the centromere. It localises to the kinetochore. It carries out the reaction L-seryl-[protein] + ATP = O-phospho-L-seryl-[protein] + ADP + H(+). The enzyme catalyses L-threonyl-[protein] + ATP = O-phospho-L-threonyl-[protein] + ADP + H(+). Its function is as follows. Serine/threonine kinase involved in spliceosomal assembly as well as mitosis and signaling regulation. Connects chromatin mediated regulation of transcription and pre-mRNA splicing. During spliceosomal assembly, interacts with and phosphorylates PRPF6 and PRPF31, components of the U4/U6-U5 tri-small nuclear ribonucleoprotein (snRNP), to facilitate the formation of the spliceosome B complex. Plays a role in regulating transcription and the spindle assembly checkpoint (SAC). Associates with U5 snRNP and NCOR1 deacetylase complexes which may allow a coordination of pre-mRNA splicing with chromatin remodeling events involved in transcriptional regulation. Associates and probably phosphorylates SMARCA4 and NCOR1. Phosphorylates SRSF1. Associates with kinetochores during mitosis and is necessary for recruitment and maintenance of the checkpoint proteins such as MAD1L1 and MAD12L1 at the kinetochores. Phosphorylates and regulates the activity of the transcription factors such as ELK1 and KLF13. Phosphorylates nuclear YAP1 and WWTR1/TAZ which induces nuclear exclusion and regulates Hippo signaling pathway, involved in tissue growth control. This is Serine/threonine-protein kinase PRP4 homolog (PRP4K) from Pongo abelii (Sumatran orangutan).